Consider the following 239-residue polypeptide: Type III pantothenate kinase (239 aa).

An ATP-binding site is contributed by 6–13; the sequence is DAGNTRLK. Substrate-binding positions include Y87 and 94 to 97; that span reads GADR. D96 serves as the catalytic Proton acceptor. T119 contributes to the ATP binding site. S169 is a binding site for substrate.

Belongs to the type III pantothenate kinase family. As to quaternary structure, homodimer. Requires NH4(+) as cofactor. K(+) serves as cofactor.

It is found in the cytoplasm. It carries out the reaction (R)-pantothenate + ATP = (R)-4'-phosphopantothenate + ADP + H(+). The protein operates within cofactor biosynthesis; coenzyme A biosynthesis; CoA from (R)-pantothenate: step 1/5. Its function is as follows. Catalyzes the phosphorylation of pantothenate (Pan), the first step in CoA biosynthesis. In Laribacter hongkongensis (strain HLHK9), this protein is Type III pantothenate kinase.